We begin with the raw amino-acid sequence, 353 residues long: UPF0658 Golgi apparatus membrane protein C23H3.04 (353 aa).

The next 8 membrane-spanning stretches (helical) occupy residues 39 to 59 (IFFL…EGYC), 76 to 96 (SLPI…YLCV), 103 to 123 (NIIE…YSIV), 172 to 192 (PFLI…GFLA), 226 to 246 (LLKI…MVLP), 249 to 269 (AVVE…ILTL), 281 to 301 (LMMT…FKII), and 318 to 338 (MITT…AIGF).

The protein belongs to the UPF0658 family.

Its subcellular location is the golgi apparatus membrane. The chain is UPF0658 Golgi apparatus membrane protein C23H3.04 from Schizosaccharomyces pombe (strain 972 / ATCC 24843) (Fission yeast).